We begin with the raw amino-acid sequence, 578 residues long: ATP-dependent RNA helicase has-1 (578 aa).

A disordered region spans residues 1 to 91 (MASEFSKKRK…KDAEAGDELT (91 aa)). Residues 13-26 (DAKIATEDGAATDK) are compositionally biased toward basic and acidic residues. Residues 27-36 (KTKKVKKDKK) show a composition bias toward basic residues. 2 stretches are compositionally biased toward acidic residues: residues 43-54 (EVVEDATPEEEN) and 77-88 (EDSDDKDAEAGD). The Q motif motif lies at 107-135 (TDFSELNLSDKTMKAIAEMGFTKMTEIQR). Positions 138–313 (IPPLLAGKDV…RISLRPGPLY (176 aa)) constitute a Helicase ATP-binding domain. 151-158 (AKTGSGKT) contributes to the ATP binding site. Residues 260 to 263 (DEAD) carry the DEAD box motif. The Bipartite nuclear localization signal motif lies at 339–355 (KRFLLLFSFLKKMQKKK). The Helicase C-terminal domain occupies 343-497 (LLFSFLKKMQ…NVQSQLEKLI (155 aa)). The tract at residues 556–578 (SMSRDKKQTSRRAYGSQPKQNRH) is disordered.

Belongs to the DEAD box helicase family. DDX18/HAS1 subfamily. In terms of assembly, associates in the nucleolus with the 60S and pre-60S ribosomal subunits.

It is found in the nucleus. The protein resides in the nucleolus. It catalyses the reaction ATP + H2O = ADP + phosphate + H(+). Functionally, ATP-dependent RNA helicase involved in 40S ribosomal subunit biogenesis. Required for the processing and cleavage of 35S pre-rRNA at sites A0, A1, and A2, leading to mature 18S rRNA. This Neurospora crassa (strain ATCC 24698 / 74-OR23-1A / CBS 708.71 / DSM 1257 / FGSC 987) protein is ATP-dependent RNA helicase has-1 (has-1).